Reading from the N-terminus, the 263-residue chain is MWFLILFLALFLGGIDAAPPVQSRIIGGFNCEKNSQPWHVAVYRFARYQCGGVLLDANWVLTAAHCYNDKYQVWLGKNNRFEDEPSAQHQLISKAIPHPGFNMSLLNKDHTPHPEDDYSNDLMLVRLKKPAEITDVVKPIDLPTEEPTVGSRCLASGWGSTTPTEEFEYSHDLQCVYLELLSNEVCAKAHTEKVTDTMLCAGEMDGGKDTCVGDSGGPLICDGVLQGITSWGPTPCALPNVPGIYTKLIEYRSWIKDVMANNP.

Positions 1–18 (MWFLILFLALFLGGIDAA) are cleaved as a signal peptide. Positions 19–24 (PPVQSR) are cleaved as a propeptide — activation peptide. One can recognise a Peptidase S1 domain in the interval 25–260 (IIGGFNCEKN…YRSWIKDVMA (236 aa)). Disulfide bonds link cysteine 31–cysteine 175, cysteine 50–cysteine 66, cysteine 153–cysteine 221, cysteine 186–cysteine 200, and cysteine 211–cysteine 236. Histidine 65 serves as the catalytic Charge relay system. Asparagine 102 carries N-linked (GlcNAc...) asparagine glycosylation. Aspartate 121 (charge relay system) is an active-site residue. Catalysis depends on serine 215, which acts as the Charge relay system.

Belongs to the peptidase S1 family. Kallikrein subfamily.

The catalysed reaction is Preferential cleavage of Arg-|-Xaa bonds in small molecule substrates. Highly selective action to release kallidin (lysyl-bradykinin) from kininogen involves hydrolysis of Met-|-Xaa or Leu-|-Xaa.. Functionally, glandular kallikreins cleave Met-Lys and Arg-Ser bonds in kininogen to release Lys-bradykinin. This is Renal glandular kallikrein from Mastomys natalensis (African soft-furred rat).